We begin with the raw amino-acid sequence, 292 residues long: MNIRGAPDLGQPSDDPNSGGERERIRQRMKMVIGQLEGILRELKEVAKELREVVSQIDKLTSDFDFELEPDDWTTATVSSTSSSDKAGVGGPFDLGHLDFMTADILSDSWEFCSFLDVSTPSDSVDGPEAPRPGTGPDYQLMNGGLPIPNGPRVETPDSSSEEAFSAGPAKGQVPQRTPGTRERVRFSDKVLYHALCCDDEEGDGEEGEEEEEGDLAPELPRVEPHTGPLKPSPAPYKTKRSPLTTRRLGPTLAPEQTRRVTRNSSTQTVSDKSTQTVLPYTATKQKAKGKN.

The tract at residues Met-1–Ile-25 is disordered. A coiled-coil region spans residues Lys-30–Asp-63. The segment at Thr-120–Asn-292 is disordered. Over residues Gly-180 to Leu-192 the composition is skewed to basic and acidic residues. The segment covering Cys-198–Leu-216 has biased composition (acidic residues). Over residues Arg-263 to Lys-285 the composition is skewed to polar residues.

The protein belongs to the INSYN1 family. As to quaternary structure, interacts with GPHN.

The protein resides in the postsynaptic density. Component of the protein machinery at the inhibitory synapses, probably acting as a scaffold. Inhibitory synapses dampen neuronal activity through postsynaptic hyperpolarization. This synaptic inhibition is fundamental for the functioning of the central nervous system, shaping and orchestrating the flow of information through neuronal networks to generate a precise neural code. In Mus musculus (Mouse), this protein is Inhibitory synaptic factor 1 (Insyn1).